The following is a 59-amino-acid chain: uncharacterized protein (59 aa).

This is an uncharacterized protein from Chenopodium amaranticolor (Quinoa).